The sequence spans 354 residues: Putative [LysW]-L-2-aminoadipate/[LysW]-L-glutamate phosphate reductase (354 aa).

NADP(+) is bound by residues 10–13 (SGVI) and 34–36 (SRR). Cys153 is an active-site residue. Asn321 is an NADP(+) binding site.

The protein belongs to the NAGSA dehydrogenase family. Type 1 subfamily. LysY sub-subfamily.

It localises to the cytoplasm. The catalysed reaction is [amino-group carrier protein]-C-terminal-N-(1-carboxy-5-oxopentan-1-yl)-L-glutamine + phosphate + NADP(+) = [amino-group carrier protein]-C-terminal-N-(1-carboxy-5-phosphooxy-5-oxopentan-1-yl)-L-glutamine + NADPH + H(+). It catalyses the reaction [amino-group carrier protein]-C-terminal-gamma-(L-glutamyl-5-semialdehyde)-L-glutamate + phosphate + NADP(+) = [amino-group carrier protein]-C-terminal-gamma-(5-phospho-L-glutamyl)-L-glutamate + NADPH + H(+). It participates in amino-acid biosynthesis; L-lysine biosynthesis via AAA pathway; L-lysine from L-alpha-aminoadipate (Thermus route): step 3/5. The protein operates within amino-acid biosynthesis; L-arginine biosynthesis. Its function is as follows. Involved in both the arginine and lysine biosynthetic pathways. This Caldivirga maquilingensis (strain ATCC 700844 / DSM 13496 / JCM 10307 / IC-167) protein is Putative [LysW]-L-2-aminoadipate/[LysW]-L-glutamate phosphate reductase.